Reading from the N-terminus, the 286-residue chain is Acetyl-coenzyme A carboxylase carboxyl transferase subunit beta (286 aa).

Positions 26-286 (LWEKCVKCDA…LAKFTRRAAV (261 aa)) constitute a CoA carboxyltransferase N-terminal domain. Zn(2+) contacts are provided by Cys-30, Cys-33, Cys-49, and Cys-52. A C4-type zinc finger spans residues 30–52 (CVKCDAVLYKPELEKNLDVCPKC).

Belongs to the AccD/PCCB family. In terms of assembly, acetyl-CoA carboxylase is a heterohexamer composed of biotin carboxyl carrier protein (AccB), biotin carboxylase (AccC) and two subunits each of ACCase subunit alpha (AccA) and ACCase subunit beta (AccD). Zn(2+) is required as a cofactor.

The protein resides in the cytoplasm. It catalyses the reaction N(6)-carboxybiotinyl-L-lysyl-[protein] + acetyl-CoA = N(6)-biotinyl-L-lysyl-[protein] + malonyl-CoA. It participates in lipid metabolism; malonyl-CoA biosynthesis; malonyl-CoA from acetyl-CoA: step 1/1. Its function is as follows. Component of the acetyl coenzyme A carboxylase (ACC) complex. Biotin carboxylase (BC) catalyzes the carboxylation of biotin on its carrier protein (BCCP) and then the CO(2) group is transferred by the transcarboxylase to acetyl-CoA to form malonyl-CoA. In Cellvibrio japonicus (strain Ueda107) (Pseudomonas fluorescens subsp. cellulosa), this protein is Acetyl-coenzyme A carboxylase carboxyl transferase subunit beta.